The sequence spans 118 residues: MTIWNVAALTGLLSVGLGAYGSHGLQKRVQDPHLLKSWSTACTYLMFHSLATMAVSLHPVYGKSRWTGPLLITGSCLFSGTIYGLCLLPKGHSLRRILGPLTPIGGLVMLTGWATMLV.

The N-terminal stretch at 1–18 is a signal peptide; it reads MTIWNVAALTGLLSVGLG. The Lumenal portion of the chain corresponds to 19–40; that stretch reads AYGSHGLQKRVQDPHLLKSWST. The chain crosses the membrane as a helical span at residues 41 to 61; that stretch reads ACTYLMFHSLATMAVSLHPVY. Residues 62 to 67 are Cytoplasmic-facing; the sequence is GKSRWT. A helical transmembrane segment spans residues 68–88; it reads GPLLITGSCLFSGTIYGLCLL. Over 89–96 the chain is Lumenal; sequence PKGHSLRR. The chain crosses the membrane as a helical span at residues 97-117; it reads ILGPLTPIGGLVMLTGWATML. Valine 118 is a topological domain (cytoplasmic).

This sequence belongs to the UPF0382 family.

It is found in the endoplasmic reticulum membrane. The protein is UPF0382 membrane protein C1782.12c of Schizosaccharomyces pombe (strain 972 / ATCC 24843) (Fission yeast).